The sequence spans 69 residues: Sec-independent protein translocase protein TatA (69 aa).

The helical transmembrane segment at 1 to 21 (MFGLGGQELILILLIILLLFG) threads the bilayer.

This sequence belongs to the TatA/E family. As to quaternary structure, forms a complex with TatC.

It is found in the cell inner membrane. In terms of biological role, part of the twin-arginine translocation (Tat) system that transports large folded proteins containing a characteristic twin-arginine motif in their signal peptide across membranes. TatA could form the protein-conducting channel of the Tat system. This is Sec-independent protein translocase protein TatA from Pelodictyon phaeoclathratiforme (strain DSM 5477 / BU-1).